Consider the following 750-residue polypeptide: Dual specificity tyrosine-phosphorylation-regulated kinase 1A (750 aa).

2 disordered regions span residues 56-81 (ALPY…RDPA) and 104-129 (YAKK…KVYN). The short motif at 109 to 126 (RRHQQGQGDDSSHKKERK) is the Bipartite nuclear localization signal element. The region spanning 151–471 (YEIDSLIGKG…PYYALQHSFF (321 aa)) is the Protein kinase domain. ATP-binding positions include 157–165 (IGKGSFGQV), Lys-180, and 230–233 (FEML). The active-site Proton acceptor is the Asp-279. 4 disordered regions span residues 400–434 (TKDG…AGES), 477–531 (EGTN…RHSG), 583–666 (SQKN…GNQA), and 731–750 (DRED…VASS). Positions 477–493 (EGTNTSNSVSTSPAMEQ) are enriched in polar residues. The segment covering 494-517 (SQSSGTTSSTSSSSGGSSGTSNSG) has biased composition (low complexity). The histidine-rich domain (HRD) stretch occupies residues 584 to 612 (QKNVPHHHGNGSHHHHHHHHHHHGQHILS). Positions 587–608 (VPHHHGNGSHHHHHHHHHHHGQ) are enriched in basic residues. Polar residues predominate over residues 610–621 (ILSNRTRTRIYN). Low complexity predominate over residues 622-659 (SPSTSSSTQDSMDIGNSHHSMTSLSSSTTSSSTSSSST). Over residues 741–750 (CVQQSPVASS) the composition is skewed to polar residues.

The protein belongs to the protein kinase superfamily. CMGC Ser/Thr protein kinase family. MNB/DYRK subfamily. Post-translationally, autophosphorylated on tyrosine residues.

The protein localises to the nucleus. The protein resides in the nucleus speckle. The enzyme catalyses L-seryl-[protein] + ATP = O-phospho-L-seryl-[protein] + ADP + H(+). The catalysed reaction is L-threonyl-[protein] + ATP = O-phospho-L-threonyl-[protein] + ADP + H(+). It catalyses the reaction L-tyrosyl-[protein] + ATP = O-phospho-L-tyrosyl-[protein] + ADP + H(+). It carries out the reaction [DNA-directed RNA polymerase] + ATP = phospho-[DNA-directed RNA polymerase] + ADP + H(+). Its function is as follows. Dual-specificity kinase which possesses both serine/threonine and tyrosine kinase activities. Exhibits a substrate preference for proline at position P+1 and arginine at position P-3. Plays an important role in double-strand breaks (DSBs) repair following DNA damage. Mechanistically, phosphorylates RNF169 and increases its ability to block accumulation of TP53BP1 at the DSB sites thereby promoting homologous recombination repair (HRR). Also acts as a positive regulator of transcription by acting as a CTD kinase that mediates phosphorylation of the CTD (C-terminal domain) of the large subunit of RNA polymerase II (RNAP II) POLR2A. Modulates alternative splicing by phosphorylating the splice factor SRSF6. Phosphorylates SEPTIN4, SEPTIN5 and SF3B1. This is Dual specificity tyrosine-phosphorylation-regulated kinase 1A from Xenopus laevis (African clawed frog).